A 336-amino-acid chain; its full sequence is uncharacterized protein (336 aa).

A disordered region spans residues 196-222; it reads YKEGDDSNWDDFGSESEDDSKEAHSEE. Positions 201–215 are enriched in acidic residues; it reads DSNWDDFGSESEDDS. Ser-211 carries the phosphoserine modification.

This is an uncharacterized protein from Schizosaccharomyces pombe (strain 972 / ATCC 24843) (Fission yeast).